Consider the following 734-residue polypeptide: Photosystem I P700 chlorophyll a apoprotein A2 (734 aa).

8 helical membrane-spanning segments follow: residues 46-69 (IFAS…FHVA), 135-158 (LYTG…LHLQ), 175-199 (LNHH…HVAI), 273-291 (MAHH…GHMY), 330-353 (LHFQ…QHMY), 369-395 (AALY…IFFI), 417-439 (AIIS…LYVH), and 517-535 (FLVH…LILV). The [4Fe-4S] cluster site is built by Cys-559 and Cys-568. 2 helical membrane-spanning segments follow: residues 575 to 596 (AFYL…YWHW) and 643 to 665 (LSVW…MFLI). Chlorophyll a is bound by residues His-654, Met-662, and Tyr-670. Residue Trp-671 participates in phylloquinone binding. The chain crosses the membrane as a helical span at residues 707–727 (LVGLAHFSVGYIFTYAAFLIA).

This sequence belongs to the PsaA/PsaB family. As to quaternary structure, the PsaA/B heterodimer binds the P700 chlorophyll special pair and subsequent electron acceptors. PSI consists of a core antenna complex that captures photons, and an electron transfer chain that converts photonic excitation into a charge separation. The eukaryotic PSI reaction center is composed of at least 11 subunits. It depends on P700 is a chlorophyll a/chlorophyll a' dimer, A0 is one or more chlorophyll a, A1 is one or both phylloquinones and FX is a shared 4Fe-4S iron-sulfur center. as a cofactor.

The protein resides in the plastid. It is found in the chloroplast thylakoid membrane. It catalyses the reaction reduced [plastocyanin] + hnu + oxidized [2Fe-2S]-[ferredoxin] = oxidized [plastocyanin] + reduced [2Fe-2S]-[ferredoxin]. Functionally, psaA and PsaB bind P700, the primary electron donor of photosystem I (PSI), as well as the electron acceptors A0, A1 and FX. PSI is a plastocyanin-ferredoxin oxidoreductase, converting photonic excitation into a charge separation, which transfers an electron from the donor P700 chlorophyll pair to the spectroscopically characterized acceptors A0, A1, FX, FA and FB in turn. Oxidized P700 is reduced on the lumenal side of the thylakoid membrane by plastocyanin. The chain is Photosystem I P700 chlorophyll a apoprotein A2 from Daucus carota (Wild carrot).